Reading from the N-terminus, the 209-residue chain is Orotate phosphoribosyltransferase (209 aa).

5-phospho-alpha-D-ribose 1-diphosphate is bound by residues Arg96, Lys100, His102, and 122-130 (EDLISTGGS). Residue Ser126 coordinates orotate.

It belongs to the purine/pyrimidine phosphoribosyltransferase family. PyrE subfamily. In terms of assembly, homodimer. The cofactor is Mg(2+).

It carries out the reaction orotidine 5'-phosphate + diphosphate = orotate + 5-phospho-alpha-D-ribose 1-diphosphate. It functions in the pathway pyrimidine metabolism; UMP biosynthesis via de novo pathway; UMP from orotate: step 1/2. Catalyzes the transfer of a ribosyl phosphate group from 5-phosphoribose 1-diphosphate to orotate, leading to the formation of orotidine monophosphate (OMP). In Streptococcus agalactiae serotype Ia (strain ATCC 27591 / A909 / CDC SS700), this protein is Orotate phosphoribosyltransferase.